A 1958-amino-acid chain; its full sequence is Echinoderm microtubule-associated protein-like 6 (1958 aa).

WD repeat units follow at residues 59 to 100, 104 to 145, 148 to 187, 195 to 233, 235 to 273, 280 to 321, 323 to 362, 364 to 403, 406 to 445, and 561 to 601; these read GHND…TVSL, VHTH…LLAS, GHSDRIFDISWDPYQPNRVVSCGVKHIKFWTLCGNALTAK, GDLQTILCLACAKEDITYSGALNGDIYVWKGLNLVRTIQ, AHSAGIFSMYACEEGFATGGRDGCIRLWDTDFKPITKID, GYKG…LILQ, HCEGELWALALHPKKPLAVTGSDDRSVRLWSLADHALIAR, NMEEAVRSVAFSPDGSQLALGMKDGSFIVLRVRDMTEVVH, DRKEVIHEMKFSPDGSYLAVGSNDGPVDVYAVAQRYKKIG, and GHSA…VSNG. The segment at 603–626 is disordered; the sequence is LETAPQEGGADSYSEESDSDLSDV. Residues 615–626 show a composition bias toward acidic residues; that stretch reads YSEESDSDLSDV. WD repeat units follow at residues 725-766, 770-811, 814-853, 861-900, 901-940, 996-1035, 1038-1077, 1080-1120, 1191-1230, and 1236-1276; these read GHDD…CLSL, QHQR…KIAT, GHKDKIFVVKCNPHHVDKLVTVGIKHIKFWQQAGGGFTSK, GKLETMMCVSYGRMEDLVFSGAATGDIFIWKDILLLKTVK, AHDGPVFAMYALDKGFVTGGKDGIVELWDDMFERCLKTYA, HMEGEVWGLAAHPLLPICATVSDDKTLRIWELSAQHRMLA, KLKKGGRCCAFSPDGKALAVGLNDGSFLVVNADTVEDMVS, HRKE…RVGI, SDITDVNAASLTKDCSLLATGDDFGFVKLFSYPVKGQHAR, and GHSA…TQES. The span at 1322 to 1337 shows a compositional bias: basic and acidic residues; sequence KPHQQLKEVSVEERPP. Residues 1322 to 1353 form a disordered region; it reads KPHQQLKEVSVEERPPVSRAAPQPEKLQKNNI. WD repeat units follow at residues 1412–1456, 1460–1501, 1504–1543, 1553–1591, 1593–1638, 1685–1724, 1726–1767, 1768–1807, 1880–1919, and 1925–1958; these read EHTD…TLSM, FHSK…KVAS, GHLERIFVVEFRPDSDTQFVSVGVKHMKFWTLAGSALLYK, AKMQTMLSVAFGANNLTFTGAINGDVYVWKDHFLIRLVA, AHTG…CRAF, HMEGEIWGLATHPSKDLFISASNDGTARIWDLADKKLLNK, SLGH…GKKR, DRKSAIQDIRISPDNRFLAVGSSEHTVDFYDLTQGTNLNR, ADKADVNCACVTHAGLNIVTGDDFGLVKLFDFPCTEKFAK, and GHSAHVTNIRFSYDDKYVVSTGGDDCSVFVWRCL.

The protein belongs to the WD repeat EMAP family.

It is found in the cytoplasm. The protein localises to the cytoskeleton. Its function is as follows. May modify the assembly dynamics of microtubules, such that microtubules are slightly longer, but more dynamic. In Homo sapiens (Human), this protein is Echinoderm microtubule-associated protein-like 6 (EML6).